The sequence spans 540 residues: Probable G-protein coupled receptor 75 (540 aa).

Positions 1-15 (MNSTGHLQDAPNATS) are enriched in polar residues. Positions 1-27 (MNSTGHLQDAPNATSLHVPHSQEGNST) are disordered. The Extracellular segment spans residues 1 to 46 (MNSTGHLQDAPNATSLHVPHSQEGNSTSLQEGLQDLIHTATLVTCT). N2, N12, and N25 each carry an N-linked (GlcNAc...) asparagine glycan. Residues 47–67 (FLLAVIFCLGSYGNFIVFLSF) traverse the membrane as a helical segment. The Cytoplasmic portion of the chain corresponds to 68 to 86 (FDPAFRKFRTNFDFMILNL). Residues 87-107 (SFCDLFICGVTAPMFTFVLFF) traverse the membrane as a helical segment. Over 108–120 (SSASSIPDAFCFT) the chain is Extracellular. The helical transmembrane segment at 121–141 (FHLTSSGFIIMSLKTVAVIAL) threads the bilayer. The Cytoplasmic portion of the chain corresponds to 142–160 (HRLRMVLGKQPNRTASFPC). A helical transmembrane segment spans residues 161–181 (TVLLTLLLWATSFTLATLATL). The Extracellular portion of the chain corresponds to 182–205 (KTSKSHLCLPMSSLIAGKGKAILS). The helical transmembrane segment at 206–226 (LYVVDFTFCVAVVSVSYIMIA) threads the bilayer. Residues 227–318 (QTLRKNAQVR…INLSTAKDSK (92 aa)) lie on the Cytoplasmic side of the membrane. Residues 319-339 (AVVTCVIIVLSVLVCCLPLGI) traverse the membrane as a helical segment. Over 340–350 (SLVQVVLSSNG) the chain is Extracellular. A helical transmembrane segment spans residues 351-371 (SFILYQFELFGFTLIFFKSGL). Residues 372–540 (NPFIYSRNSA…SAKQIPVPSV (169 aa)) are Cytoplasmic-facing.

Belongs to the G-protein coupled receptor 1 family. Expressed at high levels in brain and spinal cord and at detectable levels in retinal pigment epithelium. In situ hybridization of adult eye sections localized transcripts only to the perivascular cells, surrounding retinal arterioles, in the ganglion cell/nerve fiber layer. Also expressed by islet cells (at protein level).

It localises to the cell membrane. In terms of biological role, g protein-coupled receptor that is activated by the chemokine CCL5/RANTES. Probably coupled to heterotrimeric Gq proteins, it stimulates inositol trisphosphate production and calcium mobilization upon activation. Together with CCL5/RANTES, may play a role in neuron survival through activation of a downstream signaling pathway involving the PI3, Akt and MAP kinases. CCL5/RANTES may also regulate insulin secretion by pancreatic islet cells through activation of this receptor. This chain is Probable G-protein coupled receptor 75 (GPR75), found in Homo sapiens (Human).